The following is a 132-amino-acid chain: Small ribosomal subunit protein uS8 (132 aa).

It belongs to the universal ribosomal protein uS8 family. Part of the 30S ribosomal subunit. Contacts proteins S5 and S12.

Its function is as follows. One of the primary rRNA binding proteins, it binds directly to 16S rRNA central domain where it helps coordinate assembly of the platform of the 30S subunit. This Streptococcus pneumoniae serotype 19F (strain G54) protein is Small ribosomal subunit protein uS8.